A 176-amino-acid chain; its full sequence is Nutrient stress-induced DNA-binding protein (176 aa).

This sequence belongs to the Dps family. Hexamer.

Functionally, involved in protection of chromosomal DNA from damage under nutrient-limited and oxidative stress conditions. Binds heme. This chain is Nutrient stress-induced DNA-binding protein (dpsA), found in Synechococcus sp. (strain ATCC 27144 / PCC 6301 / SAUG 1402/1) (Anacystis nidulans).